The sequence spans 519 residues: Serine/threonine-protein kinase RIO1 (519 aa).

Over residues 1–10 (MTPAPEPQDP) the composition is skewed to pro residues. Residues 1-54 (MTPAPEPQDPPTIHEPVATEQTDDISDWDVESDYEDGYGAPSKSQAQGGASAAD) form a disordered region. Acidic residues predominate over residues 21-36 (QTDDISDWDVESDYED). A compositionally biased stretch (low complexity) spans 39-53 (GAPSKSQAQGGASAA). The 398-residue stretch at 122-519 (SEIYGTISTG…KLVAANKKRK (398 aa)) folds into the Protein kinase domain. The ATP site is built by lysine 154 and leucine 228. The active-site Proton acceptor is aspartate 281. Mg(2+) is bound by residues asparagine 286 and aspartate 298. Residue aspartate 298 is the 4-aspartylphosphate intermediate of the active site. The disordered stretch occupies residues 418-519 (ADSKVPESTG…KLVAANKKRK (102 aa)). Residues 439–464 (GSEDEEGDEGESGEVESGDEEREEGE) are compositionally biased toward acidic residues. An association with (pre-)40S ribosomal particle region spans residues 440 to 519 (SEDEEGDEGE…KLVAANKKRK (80 aa)). 2 stretches are compositionally biased toward basic residues: residues 470 to 489 (KKRPRGKKHLDKAEKHAHKM) and 497 to 519 (EKRKEKMPKHVKKKLVAANKKRK).

Belongs to the protein kinase superfamily. RIO-type Ser/Thr kinase family. Mg(2+) serves as cofactor. In terms of processing, autophosphorylated.

It is found in the cytoplasm. It catalyses the reaction L-seryl-[protein] + ATP = O-phospho-L-seryl-[protein] + ADP + H(+). The catalysed reaction is L-threonyl-[protein] + ATP = O-phospho-L-threonyl-[protein] + ADP + H(+). The enzyme catalyses ATP + H2O = ADP + phosphate + H(+). In terms of biological role, involved in the final steps of cytoplasmic maturation of the 40S ribosomal subunit. In vitro, has strong ATPase activity and only low protein kinase activity. The protein is Serine/threonine-protein kinase RIO1 of Chaetomium thermophilum (strain DSM 1495 / CBS 144.50 / IMI 039719) (Thermochaetoides thermophila).